Reading from the N-terminus, the 392-residue chain is NDP-glycosyltransferase YjiC (392 aa).

Residues Asn18, Thr229, Ser255, Val278, His293, and 297-301 (NSTME) contribute to the UDP site.

Belongs to the UDP-glycosyltransferase family. In terms of assembly, monomer.

It catalyses the reaction an NDP-glycose + an acceptor = a glycosylated acceptor + NDP.. With respect to regulation, activity is improved in the presence of Mn(2+), Mg(2+) and Ca(2+), and inhibited by Ni(2+), Zn(2+) and Cu(2+). Glycosyltransferase that can glycosylate a wide range of substrates, including various flavonoids, phenyl ketones, curcuminoid, lignins, zingerone, triterpenes, stilbene and anthraquinone, using UDP-glucose or ADP-glucose as sugar donor. It also exhibits O-, N- and S-glycosylation activities towards simple aromatics. In vivo, the broad acceptor tolerance of YjiC might function as a detoxification agent against exogenous xenobiotics to make the strain adaptable to the changeable environment. The protein is NDP-glycosyltransferase YjiC (yjiC) of Bacillus subtilis (strain 168).